The following is a 194-amino-acid chain: uncharacterized protein (194 aa).

The HTH tetR-type domain maps to 6–66 (EFDTALVLHR…SAVKSYLEGK (61 aa)). The segment at residues 29-48 (SLQDLLSHLGIARQSLYDTY) is a DNA-binding region (H-T-H motif).

This is an uncharacterized protein from Bacillus subtilis (strain 168).